A 207-amino-acid polypeptide reads, in one-letter code: 8-oxoguanine DNA glycosylase/AP lyase (207 aa).

Active-site residues include Lys-129 and Asp-147.

Belongs to the type-2 OGG1 family.

It carries out the reaction 2'-deoxyribonucleotide-(2'-deoxyribose 5'-phosphate)-2'-deoxyribonucleotide-DNA = a 3'-end 2'-deoxyribonucleotide-(2,3-dehydro-2,3-deoxyribose 5'-phosphate)-DNA + a 5'-end 5'-phospho-2'-deoxyribonucleoside-DNA + H(+). Its function is as follows. Catalyzes the excision of an oxidatively damaged form of guanine (7,8-dihydro-8-oxoguanine = 8-oxoG) from DNA. Also cleaves the DNA backbone at apurinic/apyrimidinic sites (AP sites). Has little specificity for the base opposite oxoG. The protein is 8-oxoguanine DNA glycosylase/AP lyase of Methanocaldococcus jannaschii (strain ATCC 43067 / DSM 2661 / JAL-1 / JCM 10045 / NBRC 100440) (Methanococcus jannaschii).